The following is a 127-amino-acid chain: Glycine cleavage system H protein (127 aa).

Residues 24–105 (TVKVGISDHA…PYEAWLFAVR (82 aa)) form the Lipoyl-binding domain. Lys-65 carries the post-translational modification N6-lipoyllysine.

It belongs to the GcvH family. The glycine cleavage system is composed of four proteins: P, T, L and H. (R)-lipoate is required as a cofactor.

Functionally, the glycine cleavage system catalyzes the degradation of glycine. The H protein shuttles the methylamine group of glycine from the P protein to the T protein. The sequence is that of Glycine cleavage system H protein from Methylococcus capsulatus (strain ATCC 33009 / NCIMB 11132 / Bath).